A 702-amino-acid chain; its full sequence is Ferrioxamine B receptor (702 aa).

The N-terminal stretch at 1-30 is a signal peptide; that stretch reads MPLEMFMFATTRMALLIGGAIGGATFPLFA. The TBDR plug domain maps to 55-168; that stretch reads PDIETPQSVS…PGGIVALTSR (114 aa). The TBDR beta-barrel domain maps to 173–702; it reads DAGGEVKLFA…SIVGSVSWAF (530 aa).

The protein belongs to the TonB-dependent receptor family.

It is found in the cell outer membrane. Functionally, ferrioxamine binding and uptake, in association with the TonB protein. The polypeptide is Ferrioxamine B receptor (foxA) (Salmonella typhimurium (strain LT2 / SGSC1412 / ATCC 700720)).